Consider the following 381-residue polypeptide: EPS I polysaccharide export outer membrane protein EpsA (381 aa).

An N-terminal signal peptide occupies residues Met1–Ala23. Cys24 carries N-palmitoyl cysteine lipidation. The S-diacylglycerol cysteine moiety is linked to residue Cys24.

Belongs to the BexD/CtrA/VexA family.

It localises to the cell outer membrane. Functionally, probably involved in polymerization and/or export of exopolysaccharide EPS I which functions as a virulence factor. The sequence is that of EPS I polysaccharide export outer membrane protein EpsA (epsA) from Ralstonia nicotianae (strain ATCC BAA-1114 / GMI1000) (Ralstonia solanacearum).